The sequence spans 298 residues: Movement protein BC1 (298 aa).

Residues 253-273 (LPEASLDPGDSVSQTQSMTKK) form a disordered region.

The protein belongs to the begomovirus movement protein BC1 family. As to quaternary structure, binds to dimeric supercoiled plasmid DNA. Post-translationally, phosphorylated.

The protein resides in the host cell membrane. It is found in the host microsome membrane. Its subcellular location is the host endoplasmic reticulum membrane. Its function is as follows. Transports viral genome to neighboring plant cells directly through plasmosdesmata, without any budding. The movement protein allows efficient cell to cell propagation, by bypassing the host cell wall barrier. Begomovirus genome is shuttled out of nucleus by Nuclear shuttle protein (NSP) and the movement protein transports the DNA-NSP complex to cell plasmodesmata and facilitates further movement across the cell wall. The polypeptide is Movement protein BC1 (Hewittia sublobata (Coralbush)).